Reading from the N-terminus, the 526-residue chain is Nucleobase-ascorbate transporter 4 (526 aa).

12 helical membrane passes run 42–62 (IVML…MGGG), 69–89 (VINT…LFGS), 91–111 (LPVV…ITFS), 131–151 (IQGA…FGLW), 157–177 (FLSP…LLAF), 186–206 (IEIG…LPHL), 217–237 (FAVL…TAAG), 282–302 (AFAM…SFIA), 359–381 (RVVQ…GAVL), 388–410 (IFAA…LLQF), 420–440 (FILG…TEYL), and 457–477 (VIMQ…AFLL).

This sequence belongs to the nucleobase:cation symporter-2 (NCS2) (TC 2.A.40) family. As to expression, highly expressed in the root central cylinder. Expressed in the filaments and stigmatic papillae of pollinated flowers and developing siliques.

It localises to the membrane. This chain is Nucleobase-ascorbate transporter 4 (NAT4), found in Arabidopsis thaliana (Mouse-ear cress).